The sequence spans 292 residues: Putative two-component response regulator-like APRR4 (292 aa).

Positions Arg43 to Val158 constitute a Response regulatory domain. The tract at residues Val168–Arg215 is disordered. A compositionally biased stretch (polar residues) spans Lys179–Pro191. The myb-like GARP DNA-binding region spans Arg225–Phe275.

Belongs to the ARR-like family. In terms of assembly, binds the target DNA as a monomer.

The protein localises to the nucleus. Functionally, transcriptional activator that binds specifically to the DNA sequence 5'-[AG]GATT-3'. In Arabidopsis thaliana (Mouse-ear cress), this protein is Putative two-component response regulator-like APRR4 (APRR4).